A 56-amino-acid polypeptide reads, in one-letter code: Small ribosomal subunit protein uS14 (56 aa).

4 residues coordinate Zn(2+): Cys21, Cys24, Cys39, and Cys42.

This sequence belongs to the universal ribosomal protein uS14 family. As to quaternary structure, component of the small ribosomal subunit (SSU). Mature N.crassa ribosomes consist of a small (40S) and a large (60S) subunit. The 40S small subunit contains 1 molecule of ribosomal RNA (18S rRNA) and at least 32 different proteins. The large 60S subunit contains 3 rRNA molecules (26S, 5.8S and 5S rRNA) and at least 42 different proteins. Requires Zn(2+) as cofactor.

The protein localises to the cytoplasm. Its function is as follows. Component of the ribosome, a large ribonucleoprotein complex responsible for the synthesis of proteins in the cell. The small ribosomal subunit (SSU) binds messenger RNAs (mRNAs) and translates the encoded message by selecting cognate aminoacyl-transfer RNA (tRNA) molecules. The large subunit (LSU) contains the ribosomal catalytic site termed the peptidyl transferase center (PTC), which catalyzes the formation of peptide bonds, thereby polymerizing the amino acids delivered by tRNAs into a polypeptide chain. The nascent polypeptides leave the ribosome through a tunnel in the LSU and interact with protein factors that function in enzymatic processing, targeting, and the membrane insertion of nascent chains at the exit of the ribosomal tunnel. This Neurospora crassa (strain ATCC 24698 / 74-OR23-1A / CBS 708.71 / DSM 1257 / FGSC 987) protein is Small ribosomal subunit protein uS14 (rps-29).